The chain runs to 489 residues: Cytochrome P450-DIT2 (489 aa).

C435 provides a ligand contact to heme.

This sequence belongs to the cytochrome P450 family. The cofactor is heme.

Involved in spore wall maturation. Thought to catalyze the oxidation of tyrosine residues in the formation of LL-dityrosine a precursor of the spore wall. The sequence is that of Cytochrome P450-DIT2 (DIT2) from Saccharomyces cerevisiae (strain ATCC 204508 / S288c) (Baker's yeast).